Consider the following 101-residue polypeptide: Small integral membrane protein 19 (101 aa).

The chain crosses the membrane as a helical span at residues 25–43 (ATNVYLIVILVSIGLFMYA).

This sequence belongs to the SMIM19 family.

Its subcellular location is the membrane. This Xenopus tropicalis (Western clawed frog) protein is Small integral membrane protein 19 (smim19).